Consider the following 282-residue polypeptide: ATP synthase gamma chain (282 aa).

The protein belongs to the ATPase gamma chain family. In terms of assembly, F-type ATPases have 2 components, CF(1) - the catalytic core - and CF(0) - the membrane proton channel. CF(1) has five subunits: alpha(3), beta(3), gamma(1), delta(1), epsilon(1). CF(0) has three main subunits: a, b and c.

The protein resides in the cell membrane. Its function is as follows. Produces ATP from ADP in the presence of a proton gradient across the membrane. The gamma chain is believed to be important in regulating ATPase activity and the flow of protons through the CF(0) complex. In Clostridium botulinum (strain Loch Maree / Type A3), this protein is ATP synthase gamma chain.